Consider the following 72-residue polypeptide: Translational regulator CsrA (72 aa).

This sequence belongs to the CsrA/RsmA family. In terms of assembly, homodimer; the beta-strands of each monomer intercalate to form a hydrophobic core, while the alpha-helices form wings that extend away from the core.

It is found in the cytoplasm. Functionally, a translational regulator that binds mRNA to regulate translation initiation and/or mRNA stability. Usually binds in the 5'-UTR at or near the Shine-Dalgarno sequence preventing ribosome-binding, thus repressing translation. Its main target seems to be the major flagellin gene, while its function is anatagonized by FliW. In Clostridium novyi (strain NT), this protein is Translational regulator CsrA.